The following is a 451-amino-acid chain: tRNA-2-methylthio-N(6)-dimethylallyladenosine synthase (451 aa).

The region spanning 10-128 is the MTTase N-terminal domain; the sequence is KKFYTLTFGC…FPQLLEHVMQ (119 aa). The [4Fe-4S] cluster site is built by cysteine 19, cysteine 55, cysteine 89, cysteine 165, cysteine 169, and cysteine 172. The region spanning 151–381 is the Radical SAM core domain; sequence REDSIKAWVV…ISVQQEISEQ (231 aa). The 64-residue stretch at 384–447 folds into the TRAM domain; sequence KDLENTVQRI…SWNLYGEIFE (64 aa).

This sequence belongs to the methylthiotransferase family. MiaB subfamily. In terms of assembly, monomer. [4Fe-4S] cluster is required as a cofactor.

The protein resides in the cytoplasm. The enzyme catalyses N(6)-dimethylallyladenosine(37) in tRNA + (sulfur carrier)-SH + AH2 + 2 S-adenosyl-L-methionine = 2-methylsulfanyl-N(6)-dimethylallyladenosine(37) in tRNA + (sulfur carrier)-H + 5'-deoxyadenosine + L-methionine + A + S-adenosyl-L-homocysteine + 2 H(+). Functionally, catalyzes the methylthiolation of N6-(dimethylallyl)adenosine (i(6)A), leading to the formation of 2-methylthio-N6-(dimethylallyl)adenosine (ms(2)i(6)A) at position 37 in tRNAs that read codons beginning with uridine. The polypeptide is tRNA-2-methylthio-N(6)-dimethylallyladenosine synthase (Natranaerobius thermophilus (strain ATCC BAA-1301 / DSM 18059 / JW/NM-WN-LF)).